Here is a 177-residue protein sequence, read N- to C-terminus: Co-chaperone protein HscB homolog (177 aa).

Residues 8–80 (DYFSLFGMPR…LSRAQYLLEL (73 aa)) form the J domain.

Belongs to the HscB family. As to quaternary structure, interacts with HscA and stimulates its ATPase activity.

Functionally, co-chaperone involved in the maturation of iron-sulfur cluster-containing proteins. Seems to help targeting proteins to be folded toward HscA. The protein is Co-chaperone protein HscB homolog of Azoarcus sp. (strain BH72).